Here is a 143-residue protein sequence, read N- to C-terminus: Aspartate 1-decarboxylase (143 aa).

Residue serine 25 is the Schiff-base intermediate with substrate; via pyruvic acid of the active site. A Pyruvic acid (Ser) modification is found at serine 25. Threonine 57 contributes to the substrate binding site. The active-site Proton donor is the tyrosine 58. Residue glycine 73 to alanine 75 coordinates substrate.

It belongs to the PanD family. As to quaternary structure, heterooctamer of four alpha and four beta subunits. It depends on pyruvate as a cofactor. Is synthesized initially as an inactive proenzyme, which is activated by self-cleavage at a specific serine bond to produce a beta-subunit with a hydroxyl group at its C-terminus and an alpha-subunit with a pyruvoyl group at its N-terminus.

The protein localises to the cytoplasm. It carries out the reaction L-aspartate + H(+) = beta-alanine + CO2. It participates in cofactor biosynthesis; (R)-pantothenate biosynthesis; beta-alanine from L-aspartate: step 1/1. Its function is as follows. Catalyzes the pyruvoyl-dependent decarboxylation of aspartate to produce beta-alanine. This chain is Aspartate 1-decarboxylase, found in Mycolicibacterium paratuberculosis (strain ATCC BAA-968 / K-10) (Mycobacterium paratuberculosis).